Reading from the N-terminus, the 389-residue chain is DEAD-box ATP-dependent RNA helicase CshC (389 aa).

Residues 1–26 (MIKDMQPFLQQAWEKAGFKELTEIQK) carry the Q motif motif. Residues 29-199 (IPTILEGQDV…RDLAVEPQLV (171 aa)) enclose the Helicase ATP-binding domain. 42–49 (SPTGTGKT) lines the ATP pocket. The DEAD box signature appears at 147–150 (DEFD). In terms of domain architecture, Helicase C-terminal spans 209 to 379 (LVEHTYIICE…TKPKAPKKKK (171 aa)). Residues 368–389 (VETKPKAPKKKKPAFTGKKKPR) form a disordered region. Residues 373–389 (KAPKKKKPAFTGKKKPR) are compositionally biased toward basic residues.

The catalysed reaction is ATP + H2O = ADP + phosphate + H(+). Functionally, DEAD-box RNA helicase. Probably has an RNA-dependent ATPase activity and a 3' to 5' RNA helicase activity that uses the energy of ATP hydrolysis to destabilize and unwind short RNA duplexes. This chain is DEAD-box ATP-dependent RNA helicase CshC (cshC), found in Bacillus cereus (strain ATCC 14579 / DSM 31 / CCUG 7414 / JCM 2152 / NBRC 15305 / NCIMB 9373 / NCTC 2599 / NRRL B-3711).